Consider the following 272-residue polypeptide: Sulfur carrier protein FdhD (272 aa).

Cys114 acts as the Cysteine persulfide intermediate in catalysis.

It belongs to the FdhD family.

The protein resides in the cytoplasm. Functionally, required for formate dehydrogenase (FDH) activity. Acts as a sulfur carrier protein that transfers sulfur from IscS to the molybdenum cofactor prior to its insertion into FDH. The protein is Sulfur carrier protein FdhD of Mycolicibacterium paratuberculosis (strain ATCC BAA-968 / K-10) (Mycobacterium paratuberculosis).